The primary structure comprises 480 residues: UDP-N-acetylmuramate--L-alanine ligase (480 aa).

Residue 125–131 participates in ATP binding; sequence GTHGKTT.

It belongs to the MurCDEF family.

It localises to the cytoplasm. The catalysed reaction is UDP-N-acetyl-alpha-D-muramate + L-alanine + ATP = UDP-N-acetyl-alpha-D-muramoyl-L-alanine + ADP + phosphate + H(+). It participates in cell wall biogenesis; peptidoglycan biosynthesis. Cell wall formation. This chain is UDP-N-acetylmuramate--L-alanine ligase, found in Ectopseudomonas mendocina (strain ymp) (Pseudomonas mendocina).